A 139-amino-acid polypeptide reads, in one-letter code: S-adenosyl-L-methionine-binding protein AF_0241 (139 aa).

The region spanning 3-133 is the TsaA-like domain; it reads LKPIGVVKSP…YSPEIDCVNQ (131 aa). S-adenosyl-L-methionine-binding positions include Gln16, 20 to 22, 58 to 59, Arg82, Leu92, and 113 to 116; these read PRQ, DK, and LDGS.

It belongs to the tRNA methyltransferase O family. As to quaternary structure, homodimer.

The chain is S-adenosyl-L-methionine-binding protein AF_0241 from Archaeoglobus fulgidus (strain ATCC 49558 / DSM 4304 / JCM 9628 / NBRC 100126 / VC-16).